We begin with the raw amino-acid sequence, 414 residues long: Clusterin-associated protein 1 (414 aa).

Positions 198–291 (KTKDLLNNVA…ERFEEAKNTL (94 aa)) form a coiled coil. The tract at residues 305-414 (LLKSGSNDDS…EPLDESDNDF (110 aa)) is disordered. 2 stretches are compositionally biased toward acidic residues: residues 312–328 (DDSDVDIQEDDESDSEL) and 360–389 (DSDDNEDSEESEIDMEDDDEDEDDDLEDES). Residues Ser-314, Ser-324, and Ser-326 each carry the phosphoserine modification. Position 410 is a phosphoserine (Ser-410).

This sequence belongs to the CLUAP1 family. In terms of assembly, interacts with CLU/clusterin. Interacts with UBXN10; the interaction is direct.

The protein resides in the cell projection. The protein localises to the cilium. It localises to the nucleus. Its function is as follows. Required for cilia biogenesis. Appears to function within the multiple intraflagellar transport complex B (IFT-B). Key regulator of hedgehog signaling. The chain is Clusterin-associated protein 1 (CLUAP1) from Macaca fascicularis (Crab-eating macaque).